Consider the following 338-residue polypeptide: UPF0194 membrane protein in asrC 5'region (338 aa).

A signal peptide spans 1–23 (MAISPKKRALALVVVLIVAGAVA). Residues 148–207 (KQSLDNAAAALKTARANLDRAQQALTLAIKGPRKEDIAAARQQLQADKAGLSLARRELTD) are a coiled coil.

It belongs to the UPF0194 family.

The protein localises to the periplasm. This is UPF0194 membrane protein in asrC 5'region from Acidithiobacillus ferridurans.